The primary structure comprises 561 residues: Putative ABC transporter ATP-binding protein SAV_5847 (561 aa).

Residues 2-243 (IRFEDVSVTY…SPVYPPVVDL (242 aa)) form the ABC transporter 1 domain. Residue 36-43 (GPSGVGKS) coordinates ATP. Residues 268–299 (ERLAATETPTPTATATATAAPAPSPSRPRRPR) are disordered. Positions 272 to 288 (ATETPTPTATATATAAP) are enriched in low complexity. In terms of domain architecture, ABC transporter 2 spans 315-543 (AAVEALAVRR…SPSFAPQVTK (229 aa)). 347 to 354 (GRNGAGKS) provides a ligand contact to ATP.

It belongs to the ABC transporter superfamily.

The protein localises to the cell membrane. Its function is as follows. Probably part of an ABC transporter complex. Responsible for energy coupling to the transport system. This Streptomyces avermitilis (strain ATCC 31267 / DSM 46492 / JCM 5070 / NBRC 14893 / NCIMB 12804 / NRRL 8165 / MA-4680) protein is Putative ABC transporter ATP-binding protein SAV_5847.